The sequence spans 350 residues: MSDLPELHWLHGKPTATGRLKSTPEDFKVSEDLGFTLDGEGEHVMVRVRKTGCNTAFVAEKLAKFAGIHPRDASYAGLKDRNAVTEQWFCLRMPGKEMPDFSQFTLEGCEILTTTRQQRKLRIGTLKGNHFTLVLRDISDVTSVETRLVEIQKQGVPNYFGVQRFGRNGDNLRQAWRWATNEIRVKERSKRSFYLSAARSAMFNHLVSQRLERHIYTQVLCGDAMQLHGKRSWFVAEGAELAQIQTRYEEHDIHITAPLPGKGDLGTQAQALIFETDNLADYEALWSLAQQERVDTTRRAINLLPENMSWHWLDDTTVSLSFFLPAGSFATSVVRELILLGNIDAENISE.

Phenylalanine 27 serves as a coordination point for substrate. The active-site Nucleophile is the aspartate 80. Asparagine 129 lines the substrate pocket. In terms of domain architecture, TRUD spans glycine 155–leucine 303. Position 329 (phenylalanine 329) interacts with substrate.

This sequence belongs to the pseudouridine synthase TruD family.

The enzyme catalyses uridine(13) in tRNA = pseudouridine(13) in tRNA. In terms of biological role, responsible for synthesis of pseudouridine from uracil-13 in transfer RNAs. In Proteus mirabilis (strain HI4320), this protein is tRNA pseudouridine synthase D.